The chain runs to 448 residues: MECSATPPKLYPTVDTSTTVAPLPKSSSSSSSTNNNNLYPSINVNDLVNNIFPDPTASDSASAPPLATEEVILTIHGAMVHLIDKSYSVELACGDLEILRLVQGDITVAVFARVGDEIQWPLTKDEPAVKVDESHYFFSLRPVKESESSDHSVNETENEMLNYGLTMASKGQEPMLEKLDKILADYSSFTAEEKQKEENVLDLTAAKETSPEELKGKRKKMVEKQCTAYWTTLAPNVEDYSGVAAKLIAAGSGQLIKGILWCGDLTMDRLMWGNDFMKKKLSKAEKERQVSPGTLKRLKRVKKMTKMTEKVANGVLSGVVKVSGFFSSSVINSKAGQKLFGLLPGEMVLATLDGFNKVCDAVEVAGRHVMKTTSDVTTEIVDHKYGAKTAQATNEGLSAAGHAFGTAWTVFKIRQALNPKSAMKPSSLAKTVVKTAAKERKKGKKSSK.

Residues 1-36 (MECSATPPKLYPTVDTSTTVAPLPKSSSSSSSTNNN) form a disordered region. A chloroplast-targeting transit peptide spans 1–56 (MECSATPPKLYPTVDTSTTVAPLPKSSSSSSSTNNNNLYPSINVNDLVNNIFPDPT). Low complexity predominate over residues 26–36 (SSSSSSSTNNN). The Senescence domain maps to 248–416 (IAAGSGQLIK…AWTVFKIRQA (169 aa)). Residues 422–448 (AMKPSSLAKTVVKTAAKERKKGKKSSK) are disordered. Basic residues predominate over residues 439-448 (ERKKGKKSSK).

In terms of tissue distribution, expressed in leaves (especially in midribs and trichomes), apical meristemic regions, stems, roots and flowers.

Its subcellular location is the plastid. The protein localises to the chloroplast. The polypeptide is Senescence/dehydration-associated protein At4g35985, chloroplastic (Arabidopsis thaliana (Mouse-ear cress)).